The following is a 49-amino-acid chain: Large ribosomal subunit protein bL33B (49 aa).

It belongs to the bacterial ribosomal protein bL33 family.

The protein is Large ribosomal subunit protein bL33B (rpmGB) of Bacillus licheniformis.